We begin with the raw amino-acid sequence, 90 residues long: MEIKVIKEEQNYLELQIDGEEHTIGNLLKGMLLKVPGVKFAAYSLPHPLITSITIKILTDGSISAREALIKAIELAENYANLFIDEVKKI.

The protein belongs to the archaeal Rpo11/eukaryotic RPB11/RPC19 RNA polymerase subunit family. Part of the 13-subunit RNA polymerase complex.

The protein resides in the cytoplasm. It catalyses the reaction RNA(n) + a ribonucleoside 5'-triphosphate = RNA(n+1) + diphosphate. DNA-dependent RNA polymerase (RNAP) catalyzes the transcription of DNA into RNA using the four ribonucleoside triphosphates as substrates. In Sulfolobus acidocaldarius (strain ATCC 33909 / DSM 639 / JCM 8929 / NBRC 15157 / NCIMB 11770), this protein is DNA-directed RNA polymerase subunit Rpo11.